Reading from the N-terminus, the 163-residue chain is Lipoprotein signal peptidase (163 aa).

A run of 3 helical transmembrane segments spans residues Ile-11–Thr-31, Met-64–Asn-84, and Tyr-88–Ile-108. Residues Asp-118 and Asp-136 contribute to the active site. The helical transmembrane segment at Ile-131–Leu-151 threads the bilayer.

Belongs to the peptidase A8 family.

It localises to the cell membrane. The catalysed reaction is Release of signal peptides from bacterial membrane prolipoproteins. Hydrolyzes -Xaa-Yaa-Zaa-|-(S,diacylglyceryl)Cys-, in which Xaa is hydrophobic (preferably Leu), and Yaa (Ala or Ser) and Zaa (Gly or Ala) have small, neutral side chains.. Its pathway is protein modification; lipoprotein biosynthesis (signal peptide cleavage). Its function is as follows. This protein specifically catalyzes the removal of signal peptides from prolipoproteins. The protein is Lipoprotein signal peptidase of Staphylococcus aureus (strain bovine RF122 / ET3-1).